A 116-amino-acid polypeptide reads, in one-letter code: Large ribosomal subunit protein bL17 (116 aa).

The protein belongs to the bacterial ribosomal protein bL17 family. In terms of assembly, part of the 50S ribosomal subunit. Contacts protein L32.

In Fusobacterium nucleatum subsp. nucleatum (strain ATCC 25586 / DSM 15643 / BCRC 10681 / CIP 101130 / JCM 8532 / KCTC 2640 / LMG 13131 / VPI 4355), this protein is Large ribosomal subunit protein bL17.